An 802-amino-acid chain; its full sequence is MAAITPSWALETTADGEVKEKTSGPGGQWRALNVGPDLIRSLLIRKFKTPTPIQRAAIPPALSTPPRDILGMARTGSGKTLAYLIPLLQRTGSTHHGQGPRALILCPSRELAVQIYTVGKDLARGMNKGKGKGKNKNEDEEDEEGKGKEGLRWALIIGGEGMDAQFEKMSSNPDIVIATPGRFLHLIVEMHMDLRHLQTVIYDEADRLFEMGFDVQLQEILHRLPSTRQNLLFSATLPSSVAEFAKAGLVNPLLVRLDAEQKISPDLALKFFSVKPGEKEASLLVLLREVIGKPNQPEPADPSSAPQAIVFVATKHHVDYVAELLRTTGYRTSLIYSSLDQVARQQQLAGFRSHQSDVLVVTDVAARGLDIPIMDHVINYDFPAGPRIFVHRVGRTARAGRKGTAYSLIVKEDFPYLCDLHTFLGTERMGEPADVLRSLPIEQLSENVEYVFHNLDETAPHITALRNVMRKGQGMFERSRTKANPTSYRQAKSLASALSNNPPRIDDMFEDAMEVEVNEEKARLLAKVAAFTPSETVFEVGKRESESAIIMKKRRKTVDERQKRVSKAEAEKSTASGMEKAPVKELPAPQLPSKNFKDPSFYLDHTQRGAEAEKGYSLKSGVESLSGAITDMTADEGTGPKAQKASQLSWDRKKHKFIKKNGSADGEKMIKSESGALLPASYSSGKYQEWKSKRRHMPDGPVEALALGGGRRGRHGPPGQKRKAEDGDGGEDAGGKGRKDQGKSKGTGKGKDDFKQKSPGKPGKKGIKQSSGLKSAMDIRKQREIAQKRKEKNARKPQKFRK.

Residues 27-55 (GQWRALNVGPDLIRSLLIRKFKTPTPIQR) carry the Q motif motif. Residues 60–255 (PALSTPPRDI…KAGLVNPLLV (196 aa)) enclose the Helicase ATP-binding domain. An ATP-binding site is contributed by 73–80 (ARTGSGKT). The segment at 126 to 147 (MNKGKGKGKNKNEDEEDEEGKG) is disordered. A DEAD box motif is present at residues 203-206 (DEAD). Residues 286–447 (LLREVIGKPN…SLPIEQLSEN (162 aa)) enclose the Helicase C-terminal domain. Disordered regions lie at residues 555-596 (RKTV…SKNF) and 632-802 (MTAD…KFRK). Composition is skewed to basic and acidic residues over residues 557-572 (TVDERQKRVSKAEAEK), 733-756 (AGGKGRKDQGKSKGTGKGKDDFKQ), and 777-788 (MDIRKQREIAQK). Residues 789–802 (RKEKNARKPQKFRK) are compositionally biased toward basic residues.

The protein belongs to the DEAD box helicase family. DDX54/DBP10 subfamily.

Its subcellular location is the nucleus. It localises to the nucleolus. The catalysed reaction is ATP + H2O = ADP + phosphate + H(+). Its function is as follows. ATP-binding RNA helicase involved in the biogenesis of 60S ribosomal subunits and is required for the normal formation of 25S and 5.8S rRNAs. In Cryptococcus neoformans var. neoformans serotype D (strain B-3501A) (Filobasidiella neoformans), this protein is ATP-dependent RNA helicase DBP10 (DBP10).